The primary structure comprises 189 residues: GTPase HRas (189 aa).

Residue M1 is modified to N-acetylmethionine; in GTPase HRas; alternate. N-acetylthreonine; in GTPase HRas, N-terminally processed is present on T2. Residues 13–18 (GVGKSA), 29–35 (VDEYDPT), 59–60 (AG), 116–119 (NKCD), and 145–147 (SAK) contribute to the GTP site. Positions 32–40 (YDPTIEDSY) match the Effector region motif. (Microbial infection) O-linked (Glc) threonine; by P.sordellii toxin TcsL glycosylation occurs at T35. Position 118 is an S-nitrosocysteine (C118). The segment at 166–185 (HKLRKLNPPDESGPGCMSCK) is hypervariable region. A Glycyl lysine isopeptide (Lys-Gly) (interchain with G-Cter in ubiquitin) cross-link involves residue K170. C181 is lipidated: S-palmitoyl cysteine. Residue C184 is the site of S-(15-deoxy-Delta12,14-prostaglandin J2-9-yl)cysteine; alternate attachment. A lipid anchor (S-palmitoyl cysteine; alternate) is attached at C184. C186 is modified (cysteine methyl ester). C186 is lipidated: S-farnesyl cysteine. A propeptide spans 187–189 (VLS) (removed in mature form).

This sequence belongs to the small GTPase superfamily. Ras family. In its GTP-bound form interacts with PLCE1. Interacts with TBC1D10C. Interacts with RGL3. Interacts with HSPD1. Found in a complex with at least BRAF, HRAS, MAP2K1, MAPK3 and RGS14. Interacts (active GTP-bound form) with RGS14 (via RBD 1 domain). Forms a signaling complex with RASGRP1 and DGKZ. Interacts with RASSF5. Interacts with PDE6D. Interacts with IKZF3. Interacts with RACK1. Interacts with PIK3CG; the interaction is required for membrane recruitment and beta-gamma G protein dimer-dependent activation of the PI3K gamma complex PIK3CG:PIK3R6. Interacts with RAPGEF2. Interacts (active GTP-bound form) with both SHOC2 and PP1c (all isoforms) to form a tertiary complex; SHOC2 and PP1c preferably bind M-Ras/MRAS, but they also bind K-Ras/KRAS, N-Ras/NRAS and H-Ras/HRAS. Interacts (GTP-bound form) with MAPKAP1/SIN1; inhibiting H-Ras/HRAS activity. Palmitoylated by the ZDHHC9-GOLGA7 complex. A continuous cycle of de- and re-palmitoylation regulates rapid exchange between plasma membrane and Golgi. Post-translationally, S-nitrosylated; critical for redox regulation. Important for stimulating guanine nucleotide exchange. No structural perturbation on nitrosylation. In terms of processing, the covalent modification of cysteine by 15-deoxy-Delta12,14-prostaglandin-J2 is autocatalytic and reversible. It may occur as an alternative to other cysteine modifications, such as S-nitrosylation and S-palmitoylation. Acetylation at Lys-104 prevents interaction with guanine nucleotide exchange factors (GEFs). Post-translationally, fatty-acylated at Lys-170. In terms of processing, ubiquitinated by the BCR(LZTR1) E3 ubiquitin ligase complex at Lys-170 in a non-degradative manner, leading to inhibit Ras signaling by decreasing Ras association with membranes. (Microbial infection) Glucosylated at Thr-35 by P.sordellii toxin TcsL. Monoglucosylation completely prevents the recognition of the downstream effector, blocking the GTPases in their inactive form, leading to inhibit Ras signaling. Widely expressed.

The protein localises to the cell membrane. Its subcellular location is the golgi apparatus. It localises to the golgi apparatus membrane. The protein resides in the nucleus. It is found in the cytoplasm. The protein localises to the perinuclear region. The catalysed reaction is GTP + H2O = GDP + phosphate + H(+). Alternates between an inactive form bound to GDP and an active form bound to GTP. Activated by a guanine nucleotide-exchange factor (GEF) and inactivated by a GTPase-activating protein (GAP). Its function is as follows. Involved in the activation of Ras protein signal transduction. Ras proteins bind GDP/GTP and possess intrinsic GTPase activity. This chain is GTPase HRas (HRAS), found in Homo sapiens (Human).